The primary structure comprises 159 residues: Probable minor fimbrial protein (159 aa).

The propeptide at 1–6 (MKKMHG) is leader sequence. Position 7 is an N-methylphenylalanine (Phe-7). Residues 7-27 (FTLIELMIVVAIIGVLASTAL) form a helical membrane-spanning segment. Disulfide bonds link Cys-56–Cys-71 and Cys-140–Cys-153.

The protein belongs to the N-Me-Phe pilin family. As to quaternary structure, the pili are polar flexible filaments of about 5.4 nanometers diameter and 2.5 micrometers average length; they consist of only a single polypeptide chain arranged in a helical configuration of five subunits per turn in the assembled pilus.

The protein localises to the fimbrium. Its subcellular location is the membrane. This is Probable minor fimbrial protein (fimZ) from Dichelobacter nodosus (Bacteroides nodosus).